A 491-amino-acid chain; its full sequence is UDP-glycosyltransferase 73C1 (491 aa).

UDP-alpha-D-glucose contacts are provided by residues serine 292, 352 to 354 (SPQ), 369 to 377 (HCGWNSTLE), and 391 to 394 (FGDQ).

It belongs to the UDP-glycosyltransferase family.

In terms of biological role, involved in the O-glucosylation of trans-zeatin and dihydrozeatin. Also active in vitro on cis-zeatin, dihydrozeatin-9-N-Glc, and olomoucine. Can detoxify the explosive 2,4,6-trinitrotoluene in plant by forming O- or C-glucose conjugates. The chain is UDP-glycosyltransferase 73C1 (UGT73C1) from Arabidopsis thaliana (Mouse-ear cress).